The primary structure comprises 188 residues: Protein SSX5 (188 aa).

One can recognise a KRAB-related domain in the interval 20-83 (KMQKAFDDIA…KRVADFQGND (64 aa)). Residues 78–188 (DFQGNDFDND…EISDPQEDDE (111 aa)) form a disordered region. The span at 112-122 (TPEKPAEEGND) shows a compositional bias: basic and acidic residues. Residues 144–155 (KLNTSEKVNKTS) are compositionally biased toward polar residues. Residues 156-170 (GPKRGKHAWTHRVRE) are compositionally biased toward basic residues. Acidic residues predominate over residues 179 to 188 (EISDPQEDDE).

This sequence belongs to the SSX family.

Its function is as follows. Could act as a modulator of transcription. The protein is Protein SSX5 (SSX5) of Homo sapiens (Human).